The following is a 440-amino-acid chain: Aclacinomycin-T 2-deoxy-L-fucose transferase (440 aa).

The catalysed reaction is dTDP-2-deoxy-beta-L-fucose + aclacinomycin T = aclacinomycin S + dTDP + H(+). Its function is as follows. Involved in the biosynthesis of the trisaccharide moiety characteristic of the antitumor drug aclacinomycins. In the first reaction, AknK catalyzes the transfer of 2-deoxy-beta-L-fucose from the activated donor dTDP-2-deoxy-beta-L-fucose to the mono-glycosylated aclacinomycin T (rhodosaminyl aklavinone), forming the di-glycosylated aclacinomycin S (L-2-deoxyfucosyl-L-rhodosaminyl aklavinone). It can also catalyze the addition of an alternate dTDP-L-sugar, dTDP-L-daunosamine, to aclacinomycin T and the addition of 2-deoxy-beta-L-fucose to the mono-glycosylated aglycones (monoglycosylated anthracyclines) such as daunomycin (daunorubicin), adriamycin (doxorubicin) and idarubicin. In vitro, AknK also catalyzes the addition of a second L-2-deoxyfucosyl moiety from dTDP-2-deoxy-beta-L-fucose, albeit with reduced activity, to the natural disaccharide chain of aclacinomycin S to produce L-deoxyfucosyl-L-deoxyfucosyl-L-rhodosaminyl aklavinone (2-deoxy-alpha-D-fucosyl-aclacinomycin S), a variant of the natural aclacinomycin A. This is Aclacinomycin-T 2-deoxy-L-fucose transferase from Streptomyces galilaeus.